A 761-amino-acid chain; its full sequence is Translational repressor ifet-1 (761 aa).

5 disordered regions span residues Ser-101–Gly-274, Lys-386–His-446, Val-557–Gln-592, Gln-681–Gln-702, and Gly-730–Lys-761. Composition is skewed to basic and acidic residues over residues Pro-114–Gly-128, Arg-164–Leu-189, and Ile-212–Lys-222. 4 stretches are compositionally biased toward polar residues: residues Gln-400–Gln-410, Val-557–Ala-568, Ser-576–Gln-592, and Glu-690–Gln-702.

As to quaternary structure, interacts with cgh-1. Interacts with ife-1 and oma-1. As to expression, in the embryo, significantly enriched in the germ cell lineage.

The protein resides in the cytoplasm. Involved in translational repression of multiple mRNAs in the distal gonad. Recruited to the 3' untranslated region (UTR) of zif-1 by oma-1 and is required for translational repression of zif-1. May also be involved in translational repression of mei-1 through recruitment to the mei-1 3' UTR by oma-1. Required for oogenesis but not spermatogenesis, for P granule formation and for the localization of car-1 and cgh-1 to P granules. Required for normal spindle orientation in early embryos. This is Translational repressor ifet-1 from Caenorhabditis elegans.